Consider the following 352-residue polypeptide: Neuronal growth regulator 1 (352 aa).

The first 35 residues, 1-35 (MVPLVRGAGGSHQWLAAVLLGLCCLLPAGRLAAPG), serve as a signal peptide directing secretion. 3 Ig-like C2-type domains span residues 36–132 (GDFP…VHLT), 137–219 (PKIF…KVTV), and 223–311 (PTIQ…LPLN). Cysteine 58 and cysteine 116 are joined by a disulfide. N-linked (GlcNAc...) asparagine glycosylation is found at asparagine 71 and asparagine 153. Disulfide bonds link cysteine 158–cysteine 201 and cysteine 243–cysteine 295. N-linked (GlcNAc...) asparagine glycans are attached at residues asparagine 273, asparagine 284, asparagine 292, and asparagine 305. Residue glycine 322 is the site of GPI-anchor amidated glycine attachment. Positions 323-352 (DAEVLFSCWYLVLTLSSLTSIFYLKNIILH) are cleaved as a propeptide — removed in mature form.

This sequence belongs to the immunoglobulin superfamily. IgLON family. In terms of assembly, interacts with CEPU-1 and LAMP. Glycosylated. As to expression, expressed in embryonic retina, telencephalon, tectum, cerebellum and diencephalon (at protein level).

Its subcellular location is the cell membrane. Functionally, may be involved in cell-adhesion. May participate in the regulation of neurite outgrowth in the developing brain. The sequence is that of Neuronal growth regulator 1 (NEGR1) from Gallus gallus (Chicken).